Consider the following 485-residue polypeptide: Polyol:NADP oxidoreductase (485 aa).

Belongs to the mannitol dehydrogenase family.

The protein localises to the cytoplasm. The chain is Polyol:NADP oxidoreductase (por) from Gluconobacter oxydans (strain 621H) (Gluconobacter suboxydans).